Reading from the N-terminus, the 346-residue chain is Ribonucleoside-diphosphate reductase subunit beta (346 aa).

Glu89, Glu120, and His123 together coordinate Fe cation. Tyr129 is an active-site residue. 3 residues coordinate Fe cation: Glu193, Glu227, and His230.

It belongs to the ribonucleoside diphosphate reductase small chain family. In terms of assembly, tetramer of two alpha and two beta subunits. Fe cation is required as a cofactor.

It carries out the reaction a 2'-deoxyribonucleoside 5'-diphosphate + [thioredoxin]-disulfide + H2O = a ribonucleoside 5'-diphosphate + [thioredoxin]-dithiol. Functionally, provides the precursors necessary for DNA synthesis. Catalyzes the biosynthesis of deoxyribonucleotides from the corresponding ribonucleotides. This chain is Ribonucleoside-diphosphate reductase subunit beta (nrdB), found in Chlamydia muridarum (strain MoPn / Nigg).